The following is a 241-amino-acid chain: 3-dehydroquinate dehydratase (241 aa).

Residues 35–37 (ELR) and Arg70 contribute to the 3-dehydroquinate site. His132 functions as the Proton donor/acceptor in the catalytic mechanism. Lys159 acts as the Schiff-base intermediate with substrate in catalysis. Residues Arg201 and Gln224 each coordinate 3-dehydroquinate.

The protein belongs to the type-I 3-dehydroquinase family. In terms of assembly, homodimer.

The catalysed reaction is 3-dehydroquinate = 3-dehydroshikimate + H2O. The protein operates within metabolic intermediate biosynthesis; chorismate biosynthesis; chorismate from D-erythrose 4-phosphate and phosphoenolpyruvate: step 3/7. In terms of biological role, involved in the third step of the chorismate pathway, which leads to the biosynthesis of aromatic amino acids. Catalyzes the cis-dehydration of 3-dehydroquinate (DHQ) and introduces the first double bond of the aromatic ring to yield 3-dehydroshikimate. This chain is 3-dehydroquinate dehydratase, found in Staphylococcus carnosus (strain TM300).